The following is a 139-amino-acid chain: Large ribosomal subunit protein uL16 (139 aa).

Residues 1 to 20 (MLIPKRTKYRKQHRPVRRGM) show a composition bias toward basic residues. The tract at residues 1 to 21 (MLIPKRTKYRKQHRPVRRGMS) is disordered.

This sequence belongs to the universal ribosomal protein uL16 family. As to quaternary structure, part of the 50S ribosomal subunit.

In terms of biological role, binds 23S rRNA and is also seen to make contacts with the A and possibly P site tRNAs. This Bifidobacterium adolescentis (strain ATCC 15703 / DSM 20083 / NCTC 11814 / E194a) protein is Large ribosomal subunit protein uL16.